An 869-amino-acid chain; its full sequence is Protein translocase subunit SecA (869 aa).

ATP is bound by residues Q85, 103–107, and D508; that span reads GEGKT.

It belongs to the SecA family. As to quaternary structure, monomer and homodimer. Part of the essential Sec protein translocation apparatus which comprises SecA, SecYEG and auxiliary proteins SecDF. Other proteins may also be involved.

It is found in the cell membrane. The protein localises to the cytoplasm. It carries out the reaction ATP + H2O + cellular proteinSide 1 = ADP + phosphate + cellular proteinSide 2.. In terms of biological role, part of the Sec protein translocase complex. Interacts with the SecYEG preprotein conducting channel. Has a central role in coupling the hydrolysis of ATP to the transfer of proteins into and across the cell membrane, serving as an ATP-driven molecular motor driving the stepwise translocation of polypeptide chains across the membrane. This Deinococcus geothermalis (strain DSM 11300 / CIP 105573 / AG-3a) protein is Protein translocase subunit SecA.